The sequence spans 81 residues: Short neurotoxin 1 (81 aa).

Residues methionine 1–threonine 21 form the signal peptide. 4 disulfides stabilise this stretch: cysteine 24–cysteine 43, cysteine 38–cysteine 60, cysteine 62–cysteine 73, and cysteine 74–cysteine 79.

It belongs to the three-finger toxin family. Short-chain subfamily. Type I alpha-neurotoxin sub-subfamily. In terms of tissue distribution, expressed by the venom gland.

The protein resides in the secreted. Its function is as follows. Binds to muscle nicotinic acetylcholine receptor (nAChR) and inhibit acetylcholine from binding to the receptor, thereby impairing neuromuscular transmission. This chain is Short neurotoxin 1, found in Hoplocephalus stephensii (Stephens's banded snake).